The primary structure comprises 110 residues: Inner membrane protein H108R (110 aa).

Residues 10-32 (LIVIITILITTRELSTTMLIVSL) form a helical membrane-spanning segment.

It belongs to the asfivirus H108R family.

The protein resides in the virion membrane. This is Inner membrane protein H108R from African swine fever virus (isolate Pig/Kenya/KEN-50/1950) (ASFV).